The sequence spans 657 residues: LIM and SH3 domain protein Lasp (657 aa).

The 61-residue stretch at 3-63 (KTCARCQKVV…EAHIPKAKAT (61 aa)) folds into the LIM zinc-binding domain. 2 Nebulin repeats span residues 64 to 95 (AIAD…KAKG) and 96 to 130 (KFTQ…KKAA). 6 disordered regions span residues 130 to 151 (AMEK…EYFS), 164 to 223 (PTAS…PIQH), 235 to 257 (YQQL…QLHD), 294 to 318 (LYPT…QQQA), 332 to 415 (NSHH…SAAS), and 460 to 528 (KQHA…PKRI). The span at 140 to 150 (VSDSSNESEYF) shows a compositional bias: polar residues. Low complexity-rich tracts occupy residues 172–215 (AATT…QQQT) and 236–254 (QQLQ…QQQQ). Polar residues predominate over residues 332–341 (NSHHPSGNSV). Residues 342 to 357 (DQYDQPQQQQHQPQQQ) show a composition bias toward low complexity. Positions 358–370 (STNPTLVAAQQQQ) are enriched in polar residues. The segment covering 371-403 (SHHSLLNNNASNGGISHSHHSNINNNGHGSQNQ) has biased composition (low complexity). Over residues 460 to 475 (KQHASNGHMPNQQQQH) the composition is skewed to polar residues. Phosphoserine occurs at positions 505 and 530. A disordered region spans residues 548–592 (EQAHQQQKHQQYYQQVQMMQQQEHPPQQQQMRQQPSYSSLQEKQS). Residues 549–586 (QAHQQQKHQQYYQQVQMMQQQEHPPQQQQMRQQPSYSS) show a composition bias toward low complexity. The SH3 domain maps to 596 to 657 (TAMRVYRAIY…PANYVEQAVI (62 aa)).

As to quaternary structure, interacts with osk.

The polypeptide is LIM and SH3 domain protein Lasp (Drosophila melanogaster (Fruit fly)).